The sequence spans 181 residues: ATP-dependent protease subunit HslV (181 aa).

Threonine 11 is a catalytic residue. Alanine 166, cysteine 169, and threonine 172 together coordinate Na(+).

The protein belongs to the peptidase T1B family. HslV subfamily. As to quaternary structure, a double ring-shaped homohexamer of HslV is capped on each side by a ring-shaped HslU homohexamer. The assembly of the HslU/HslV complex is dependent on binding of ATP.

It is found in the cytoplasm. It catalyses the reaction ATP-dependent cleavage of peptide bonds with broad specificity.. With respect to regulation, allosterically activated by HslU binding. Its function is as follows. Protease subunit of a proteasome-like degradation complex believed to be a general protein degrading machinery. The chain is ATP-dependent protease subunit HslV from Chlorobaculum parvum (strain DSM 263 / NCIMB 8327) (Chlorobium vibrioforme subsp. thiosulfatophilum).